The following is a 496-amino-acid chain: 4-O-methyl-glucuronoyl methylesterase 1 (496 aa).

A signal peptide spans 1 to 19; the sequence is MKSTVASALLVLAGTAVQA. Residues 20–55 enclose the CBM1 domain; that stretch reads QSGPWQQCGGIGWQGPFTCVSGHTCQVLNDWYHQCV. The segment at 57–151 is disordered; the sequence is GGGPSPPPTS…RLPDPFTFHN (95 aa). Positions 59–125 are enriched in pro residues; sequence GPSPPPTSPP…SPPPTSPPPS (67 aa). Cystine bridges form between cysteine 129/cysteine 163, cysteine 307/cysteine 443, and cysteine 339/cysteine 415. Positions 306–311 match the GXSYXG catalytic site motif motif; sequence GCSRNG. Catalysis depends on serine 308, which acts as the Nucleophile. Substrate-binding residues include lysine 312, glutamine 354, glutamate 362, and tryptophan 406. Residue histidine 442 is the Proton donor/acceptor of the active site.

The protein belongs to the carbohydrate esterase 15 (CE15) family.

It localises to the secreted. It catalyses the reaction a 4-O-methyl-alpha-D-glucuronosyl ester derivative + H2O = 4-O-methyl-alpha-D-glucuronate derivative + an alcohol + H(+). Glucuronoyl esterase which may play a significant role in biomass degradation, as it is considered to disconnect hemicellulose from lignin through the hydrolysis of the ester bond between 4-O-methyl-D-glucuronic acid residues of glucuronoxylans and aromatic alcohols of lignin. Cleaves native lignin-carbohydrate (LC) ester bonds from LC complex preparations of spruce (softwood) and birch (hardwood), containing mainly hemicelluloses with partially acetylated glucomannans in spruce and partially acetylated xylan in birch. Can hydrolyze benzyl glucuronic acid (BnGlcA), allyl glucuronic acid (allylGlcA) and to a lower degree methyl glucuronic acid (MeGlcA) in vitro. In Sodiomyces alcalophilus (Acremonium alcalophilum), this protein is 4-O-methyl-glucuronoyl methylesterase 1.